A 122-amino-acid polypeptide reads, in one-letter code: uncharacterized protein (122 aa).

The protein localises to the plastid. This is an uncharacterized protein from Euglena longa (Euglenophycean alga).